A 781-amino-acid polypeptide reads, in one-letter code: DEAD-box ATP-dependent RNA helicase 50 (781 aa).

5 disordered regions span residues 72-103 (EFAPPPSSDLLSSIPSESARRNGSRSRGLTAS), 117-148 (GKVTQKKQHMSHNEEEDEDDASDENYSADEGF), 166-240 (IPRS…KGDR), 254-292 (GRAIDEVSNPRKFNDNERAESRSSYSRDSSANSRGREDR), and 313-342 (YNPRRFTDNERGLRGGSHSKGSDTNSRGWG). The span at 79–88 (SDLLSSIPSE) shows a compositional bias: low complexity. The span at 130–143 (EEEDEDDASDENYS) shows a compositional bias: acidic residues. Residues 171–197 (KSAERNEVKRASKVRESRESRRDLDRL) are compositionally biased toward basic and acidic residues. Residues 198–208 (EGDDEDVDEVS) are compositionally biased toward acidic residues. The span at 216 to 226 (NQRAGSRSSYS) shows a compositional bias: polar residues. Over residues 254-274 (GRAIDEVSNPRKFNDNERAES) the composition is skewed to basic and acidic residues. Positions 275–286 (RSSYSRDSSANS) are enriched in low complexity. Positions 313-325 (YNPRRFTDNERGL) are enriched in basic and acidic residues. A Q motif motif is present at residues 374-402 (KTFAEIGCSEDMMKALKEQNFDRPAHIQA). One can recognise a Helicase ATP-binding domain in the interval 405–586 (FSPVIDGKSC…VEVFPDCEVV (182 aa)). Position 418–425 (418–425 (DQSGSGKT)) interacts with ATP. A DEAD box motif is present at residues 533 to 536 (DEVD). A Helicase C-terminal domain is found at 621–781 (NKKTALLQIM…DVPNAYEFTT (161 aa)).

The protein belongs to the DEAD box helicase family.

The catalysed reaction is ATP + H2O = ADP + phosphate + H(+). In terms of biological role, probably involved in resistance to biotic and abiotic stresses. The protein is DEAD-box ATP-dependent RNA helicase 50 (RH50) of Arabidopsis thaliana (Mouse-ear cress).